A 360-amino-acid polypeptide reads, in one-letter code: Phospho-N-acetylmuramoyl-pentapeptide-transferase (360 aa).

10 helical membrane passes run 18 to 38 (VFSY…FLSL), 72 to 92 (PTMG…MWAY), 94 to 114 (SNPY…VGFV), 132 to 152 (WKYF…YAVG), 168 to 188 (IMPQ…VGTS), 199 to 219 (GLAI…AWAT), 236 to 256 (AGEL…FLWF), 263 to 283 (VFMG…IAVL), 288 to 308 (FLLL…ILQV), and 338 to 358 (VIVR…ATLK).

It belongs to the glycosyltransferase 4 family. MraY subfamily. Requires Mg(2+) as cofactor.

Its subcellular location is the cell inner membrane. It carries out the reaction UDP-N-acetyl-alpha-D-muramoyl-L-alanyl-gamma-D-glutamyl-meso-2,6-diaminopimeloyl-D-alanyl-D-alanine + di-trans,octa-cis-undecaprenyl phosphate = di-trans,octa-cis-undecaprenyl diphospho-N-acetyl-alpha-D-muramoyl-L-alanyl-D-glutamyl-meso-2,6-diaminopimeloyl-D-alanyl-D-alanine + UMP. Its pathway is cell wall biogenesis; peptidoglycan biosynthesis. Its function is as follows. Catalyzes the initial step of the lipid cycle reactions in the biosynthesis of the cell wall peptidoglycan: transfers peptidoglycan precursor phospho-MurNAc-pentapeptide from UDP-MurNAc-pentapeptide onto the lipid carrier undecaprenyl phosphate, yielding undecaprenyl-pyrophosphoryl-MurNAc-pentapeptide, known as lipid I. The polypeptide is Phospho-N-acetylmuramoyl-pentapeptide-transferase (Serratia proteamaculans (strain 568)).